The following is a 459-amino-acid chain: GTPase Der (459 aa).

2 EngA-type G domains span residues 3–167 (FTFA…PEPE) and 188–363 (IRVA…AVWN). GTP-binding positions include 9–16 (GRPNVGKS), 56–60 (DTAGL), 119–122 (NKSE), 194–201 (GRPNAGKS), 241–245 (DTAGL), and 306–309 (NKWD). One can recognise a KH-like domain in the interval 364-448 (TRVSTAALNR…PVRITLREKA (85 aa)).

It belongs to the TRAFAC class TrmE-Era-EngA-EngB-Septin-like GTPase superfamily. EngA (Der) GTPase family. As to quaternary structure, associates with the 50S ribosomal subunit.

Its function is as follows. GTPase that plays an essential role in the late steps of ribosome biogenesis. In Rhodopseudomonas palustris (strain HaA2), this protein is GTPase Der.